Reading from the N-terminus, the 367-residue chain is ABI gene family member 3 (367 aa).

Residues 36–64 are a coiled coil; that stretch reads CEDNYLQATDKRKALEETMAFTTQALASV. Positions 163–273 are disordered; the sequence is LSRTGTLSRK…LEVSQPPLEA (111 aa). A compositionally biased stretch (low complexity) spans 206 to 225; the sequence is SAASSASSLASAGSAEGASG. Residues S216 and S219 each carry the phosphoserine modification. Pro residues predominate over residues 236–264; that stretch reads ATPPPPPVAPVTPPPPPLSAEVFLPPPPL. The 59-residue stretch at 309 to 367 folds into the SH3 domain; it reads SYLEKVVTLYPYTRQKDNELSFSEGTVICVTRRYSDGWCEGVSSEGTGFFPGNYVEPSC. Phosphoserine is present on S343.

It belongs to the ABI family. As to quaternary structure, may interact with PAK1 and PAK2. Probably interacts with TARSH.

It localises to the cytoplasm. Functionally, inhibits ectopic tumor cell metastasis of SRD cells. In vitro, reduces cell motility. This chain is ABI gene family member 3 (Abi3), found in Mus musculus (Mouse).